Consider the following 412-residue polypeptide: Putative competence-damage inducible protein (412 aa).

It belongs to the CinA family.

This Bacillus cereus (strain Q1) protein is Putative competence-damage inducible protein.